Consider the following 148-residue polypeptide: UPF0756 membrane protein CKO_01811 (148 aa).

Transmembrane regions (helical) follow at residues alanine 14 to valine 34, leucine 51 to leucine 71, leucine 86 to methionine 106, and valine 121 to valine 141.

Belongs to the UPF0756 family.

It is found in the cell membrane. This chain is UPF0756 membrane protein CKO_01811, found in Citrobacter koseri (strain ATCC BAA-895 / CDC 4225-83 / SGSC4696).